A 314-amino-acid chain; its full sequence is Acetaldehyde dehydrogenase 4 (314 aa).

15-18 contacts NAD(+); the sequence is SGNI. Residue Cys133 is the Acyl-thioester intermediate of the active site. NAD(+) contacts are provided by residues 164–172 and Asn292; that span reads SAGPGTRAN.

This sequence belongs to the acetaldehyde dehydrogenase family.

The catalysed reaction is acetaldehyde + NAD(+) + CoA = acetyl-CoA + NADH + H(+). This chain is Acetaldehyde dehydrogenase 4, found in Burkholderia lata (strain ATCC 17760 / DSM 23089 / LMG 22485 / NCIMB 9086 / R18194 / 383).